Consider the following 155-residue polypeptide: Ribonuclease H (155 aa).

An RNase H type-1 domain is found at 1–143 (MNQVEIYTDG…ADALANRGVD (143 aa)). Mg(2+) is bound by residues D9, E47, D69, and D135.

The protein belongs to the RNase H family. Monomer. Requires Mg(2+) as cofactor.

Its subcellular location is the cytoplasm. It carries out the reaction Endonucleolytic cleavage to 5'-phosphomonoester.. Functionally, endonuclease that specifically degrades the RNA of RNA-DNA hybrids. This chain is Ribonuclease H, found in Verminephrobacter eiseniae (strain EF01-2).